Here is a 119-residue protein sequence, read N- to C-terminus: Large ribosomal subunit protein uL18 (119 aa).

It belongs to the universal ribosomal protein uL18 family. In terms of assembly, part of the 50S ribosomal subunit; part of the 5S rRNA/L5/L18/L25 subcomplex. Contacts the 5S and 23S rRNAs.

Its function is as follows. This is one of the proteins that bind and probably mediate the attachment of the 5S RNA into the large ribosomal subunit, where it forms part of the central protuberance. In Clostridium perfringens (strain 13 / Type A), this protein is Large ribosomal subunit protein uL18.